Consider the following 213-residue polypeptide: Holliday junction branch migration complex subunit RuvA (213 aa).

A domain I region spans residues 1-63 (MISFLRGTVA…EDSMTLFGFA (63 aa)). Residues 64-140 (DDDEREVFEV…LVPHGTAPAA (77 aa)) are domain II. The segment at 140 to 144 (AATTA) is flexible linker. The interval 145–213 (AEASWKPQVV…RAGNRVGSRG (69 aa)) is domain III.

It belongs to the RuvA family. Homotetramer. Forms an RuvA(8)-RuvB(12)-Holliday junction (HJ) complex. HJ DNA is sandwiched between 2 RuvA tetramers; dsDNA enters through RuvA and exits via RuvB. An RuvB hexamer assembles on each DNA strand where it exits the tetramer. Each RuvB hexamer is contacted by two RuvA subunits (via domain III) on 2 adjacent RuvB subunits; this complex drives branch migration. In the full resolvosome a probable DNA-RuvA(4)-RuvB(12)-RuvC(2) complex forms which resolves the HJ.

It localises to the cytoplasm. In terms of biological role, the RuvA-RuvB-RuvC complex processes Holliday junction (HJ) DNA during genetic recombination and DNA repair, while the RuvA-RuvB complex plays an important role in the rescue of blocked DNA replication forks via replication fork reversal (RFR). RuvA specifically binds to HJ cruciform DNA, conferring on it an open structure. The RuvB hexamer acts as an ATP-dependent pump, pulling dsDNA into and through the RuvAB complex. HJ branch migration allows RuvC to scan DNA until it finds its consensus sequence, where it cleaves and resolves the cruciform DNA. The protein is Holliday junction branch migration complex subunit RuvA of Pseudarthrobacter chlorophenolicus (strain ATCC 700700 / DSM 12829 / CIP 107037 / JCM 12360 / KCTC 9906 / NCIMB 13794 / A6) (Arthrobacter chlorophenolicus).